The following is a 952-amino-acid chain: Anion exchange protein 4 (952 aa).

The segment at 1–41 is disordered; that stretch reads MKLPGQGDFESSDAHENAHSEEPDSGLGPGPGLNGPSGIDI. Residues 12-22 are compositionally biased toward basic and acidic residues; it reads SDAHENAHSEE. The next 4 helical transmembrane spans lie at 385–405, 413–433, 470–490, and 501–521; these read AVFYIYLATVTNAITFGGLLG, GVLESFLGTAVAGAAFCLMAG, VGIWVTAFCLALVATEASLLV, and FCALISLIFIYDAMGKMLNLI. N-linked (GlcNAc...) asparagine glycans are attached at residues asparagine 546 and asparagine 569. 7 helical membrane-spanning segments follow: residues 593 to 613, 634 to 654, 681 to 701, 727 to 747, 784 to 804, 807 to 827, and 870 to 890; these read VPDIAFFSLLLFFTSFLCAIA, FSSVLAILLGCGLDTFLGLAT, PWWLSVAAALPALLLSILIFM, LFCVAVLMLFTSALGLPWYVS, GLVVFVLTGVSIFLAPVLKFI, PVLYGIFLYMGVAALSSIQFV, and VVKSTPAAIVFPLMLLGLVAI. Residues 915-938 form a disordered region; the sequence is ETIPENRSEPEHLFSGNDSEDSEL. Asparagine 920, asparagine 931, and asparagine 948 each carry an N-linked (GlcNAc...) asparagine glycan.

This sequence belongs to the anion exchanger (TC 2.A.31) family. Expressed in submandibular gland (SMG) duct and cortical collecting duct (CCD) of kidney. Lower expressed in duodenal villi.

The protein resides in the basolateral cell membrane. The catalysed reaction is 2 hydrogencarbonate(out) + chloride(in) + Na(+)(out) = 2 hydrogencarbonate(in) + chloride(out) + Na(+)(in). The enzyme catalyses K(+)(in) + 2 hydrogencarbonate(in) + chloride(out) = K(+)(out) + 2 hydrogencarbonate(out) + chloride(in). It catalyses the reaction Li(+)(in) + 2 hydrogencarbonate(in) + chloride(out) = Li(+)(out) + 2 hydrogencarbonate(out) + chloride(in). It carries out the reaction Rb(+)(in) + 2 hydrogencarbonate(in) + chloride(out) = Rb(+)(out) + 2 hydrogencarbonate(out) + chloride(in). The catalysed reaction is Cs(+)(in) + 2 hydrogencarbonate(in) + chloride(out) = Cs(+)(out) + 2 hydrogencarbonate(out) + chloride(in). Its activity is regulated as follows. Cl(-)/HCO3(-) exchanger activity is substantially increased in response to 5 uM isoproterenol. Cl(-)/HCO3(-) exchanger activity is increased by both forskolin and coexpression with the catalytic subunit alpha of PKA. Its function is as follows. Electroneutral Cl(-)/HCO3(-) antiporter that favors chloride ion entry and efflux of hydrogencarbonate and sodium ion across the basolateral membrane and may participate in salivary secretion. Also mediates Cl(-)/HCO3(-) exchange activity in the presence of K(+) as well as Cs(+), Li(+), and Rb(+). Does not contribute to Cl(-)/HCO3(-) exchanger in the apical membrane of the upper villous epithelium. This is Anion exchange protein 4 from Mus musculus (Mouse).